The sequence spans 432 residues: 3-phosphoshikimate 1-carboxyvinyltransferase (432 aa).

3-phosphoshikimate is bound by residues Lys22, Ser23, and Arg27. Lys22 lines the phosphoenolpyruvate pocket. Residues Gly96 and Arg127 each contribute to the phosphoenolpyruvate site. 3-phosphoshikimate is bound by residues Ser173, Ser174, Gln175, Ser201, Asp316, Asn339, and Lys343. Gln175 is a phosphoenolpyruvate binding site. Asp316 functions as the Proton acceptor in the catalytic mechanism. The phosphoenolpyruvate site is built by Arg347, Arg391, and Lys416.

Belongs to the EPSP synthase family. As to quaternary structure, monomer.

It localises to the cytoplasm. The catalysed reaction is 3-phosphoshikimate + phosphoenolpyruvate = 5-O-(1-carboxyvinyl)-3-phosphoshikimate + phosphate. It functions in the pathway metabolic intermediate biosynthesis; chorismate biosynthesis; chorismate from D-erythrose 4-phosphate and phosphoenolpyruvate: step 6/7. Functionally, catalyzes the transfer of the enolpyruvyl moiety of phosphoenolpyruvate (PEP) to the 5-hydroxyl of shikimate-3-phosphate (S3P) to produce enolpyruvyl shikimate-3-phosphate and inorganic phosphate. The sequence is that of 3-phosphoshikimate 1-carboxyvinyltransferase from Histophilus somni (strain 2336) (Haemophilus somnus).